Consider the following 35-residue polypeptide: Coatomer subunit alpha (35 aa).

As to quaternary structure, oligomeric complex that consists of at least the alpha, beta, beta', gamma, delta, epsilon and zeta subunits. Interacts with SCYL1. Interacts with JAGN1. Interacts with TMEM41B. Interacts with SVEP1. Probably interacts with PEX11A. Gastric, duodenal and jejunal mucosa. Circulates in the blood. Seems to be confined to specific endocrine cells.

Xenin stimulates exocrine pancreatic secretion. It inhibits pentagastrin-stimulated secretion of acid, to induce exocrine pancreatic secretion and to affect small and large intestinal motility. In the gut, xenin interacts with the neurotensin receptor. The protein is Coatomer subunit alpha (COPA) of Canis lupus familiaris (Dog).